We begin with the raw amino-acid sequence, 553 residues long: Membrane protein insertase YidC (553 aa).

A run of 5 helical transmembrane segments spans residues 7-24 (VLWV…DNWQ), 365-385 (WGWA…PLSA), 435-455 (LPVV…LASV), 474-494 (PFFI…SLNP), and 509-529 (PIAF…YYVV).

The protein belongs to the OXA1/ALB3/YidC family. Type 1 subfamily. In terms of assembly, interacts with the Sec translocase complex via SecD. Specifically interacts with transmembrane segments of nascent integral membrane proteins during membrane integration.

It localises to the cell inner membrane. Its function is as follows. Required for the insertion and/or proper folding and/or complex formation of integral membrane proteins into the membrane. Involved in integration of membrane proteins that insert both dependently and independently of the Sec translocase complex, as well as at least some lipoproteins. Aids folding of multispanning membrane proteins. This is Membrane protein insertase YidC from Burkholderia orbicola (strain MC0-3).